The sequence spans 399 residues: Phosphoglycerate kinase (399 aa).

Substrate is bound by residues 24–26, Arg-39, 62–65, Arg-121, and Arg-154; these read DYN and HLGR. Residues Lys-204, Gly-295, Glu-326, and 355–358 each bind ATP; that span reads GGDS.

The protein belongs to the phosphoglycerate kinase family. Monomer.

It localises to the cytoplasm. It carries out the reaction (2R)-3-phosphoglycerate + ATP = (2R)-3-phospho-glyceroyl phosphate + ADP. It functions in the pathway carbohydrate degradation; glycolysis; pyruvate from D-glyceraldehyde 3-phosphate: step 2/5. The chain is Phosphoglycerate kinase from Elusimicrobium minutum (strain Pei191).